Here is a 37-residue protein sequence, read N- to C-terminus: Large ribosomal subunit protein bL36 (37 aa).

This sequence belongs to the bacterial ribosomal protein bL36 family.

In Syntrophomonas wolfei subsp. wolfei (strain DSM 2245B / Goettingen), this protein is Large ribosomal subunit protein bL36.